Consider the following 147-residue polypeptide: Hemoglobin subunit delta (147 aa).

The Globin domain maps to 3-147 (NLTAAEKTQV…VANALAHKYH (145 aa)). 2 residues coordinate heme b: histidine 64 and histidine 93.

Belongs to the globin family. As to quaternary structure, heterotetramer of two delta chains and two alpha chains. In terms of tissue distribution, red blood cells.

In Loxodonta africana (African elephant), this protein is Hemoglobin subunit delta (HBD).